Consider the following 225-residue polypeptide: PKHD-type hydroxylase YbiX (225 aa).

One can recognise a Fe2OG dioxygenase domain in the interval 78 to 177 (TLSTPLFNRY…RVASFMWIQS (100 aa)). Fe cation is bound by residues His-96, Asp-98, and His-158. Residue Arg-168 coordinates 2-oxoglutarate.

It depends on Fe(2+) as a cofactor. The cofactor is L-ascorbate.

In Escherichia coli (strain 55989 / EAEC), this protein is PKHD-type hydroxylase YbiX.